A 332-amino-acid chain; its full sequence is 3-dehydroquinate synthase (332 aa).

Residues 55 to 60 (DGEEYK), 89 to 93 (GVITD), 113 to 114 (TT), Lys-126, Lys-134, and 152 to 155 (TLST) contribute to the NAD(+) site. Glu-167, His-226, and His-242 together coordinate Zn(2+).

The protein belongs to the sugar phosphate cyclases superfamily. Dehydroquinate synthase family. The cofactor is NAD(+). It depends on Co(2+) as a cofactor. Zn(2+) is required as a cofactor.

Its subcellular location is the cytoplasm. The enzyme catalyses 7-phospho-2-dehydro-3-deoxy-D-arabino-heptonate = 3-dehydroquinate + phosphate. The protein operates within metabolic intermediate biosynthesis; chorismate biosynthesis; chorismate from D-erythrose 4-phosphate and phosphoenolpyruvate: step 2/7. Its function is as follows. Catalyzes the conversion of 3-deoxy-D-arabino-heptulosonate 7-phosphate (DAHP) to dehydroquinate (DHQ). The chain is 3-dehydroquinate synthase from Pyrococcus abyssi (strain GE5 / Orsay).